Consider the following 354-residue polypeptide: Probable L-ascorbate-6-phosphate lactonase UlaG (354 aa).

Belongs to the UlaG family. It depends on a divalent metal cation as a cofactor.

It localises to the cytoplasm. It catalyses the reaction L-ascorbate 6-phosphate + H2O = 3-dehydro-L-gulonate 6-phosphate. The protein operates within cofactor degradation; L-ascorbate degradation; D-xylulose 5-phosphate from L-ascorbate: step 1/4. Functionally, probably catalyzes the hydrolysis of L-ascorbate-6-P into 3-keto-L-gulonate-6-P. Is essential for L-ascorbate utilization under anaerobic conditions. This chain is Probable L-ascorbate-6-phosphate lactonase UlaG, found in Shigella dysenteriae serotype 1 (strain Sd197).